Here is a 131-residue protein sequence, read N- to C-terminus: Large ribosomal subunit protein bL17 (131 aa).

It belongs to the bacterial ribosomal protein bL17 family. As to quaternary structure, part of the 50S ribosomal subunit. Contacts protein L32.

This is Large ribosomal subunit protein bL17 from Polynucleobacter necessarius subsp. necessarius (strain STIR1).